The primary structure comprises 472 residues: 2-oxoisovalerate dehydrogenase subunit alpha 2, mitochondrial (472 aa).

Residue 185–187 participates in thiamine diphosphate binding; that stretch reads QYR. K(+)-binding residues include Ser234, Thr239, and Gln240.

The protein belongs to the BCKDHA family. Heterotetramer of alpha and beta chains. Thiamine diphosphate is required as a cofactor.

It localises to the mitochondrion matrix. It catalyses the reaction N(6)-[(R)-lipoyl]-L-lysyl-[protein] + 3-methyl-2-oxobutanoate + H(+) = N(6)-[(R)-S(8)-2-methylpropanoyldihydrolipoyl]-L-lysyl-[protein] + CO2. The branched-chain alpha-keto dehydrogenase complex catalyzes the overall conversion of alpha-keto acids to acyl-CoA and CO(2). It contains multiple copies of three enzymatic components: branched-chain alpha-keto acid decarboxylase (E1), lipoamide acyltransferase (E2) and lipoamide dehydrogenase (E3). The protein is 2-oxoisovalerate dehydrogenase subunit alpha 2, mitochondrial of Arabidopsis thaliana (Mouse-ear cress).